Consider the following 211-residue polypeptide: FMN-dependent NADH:quinone oxidoreductase (211 aa).

Residues 17–19, 102–105, and 146–149 contribute to the FMN site; these read SNS, MWNL, and SRGG.

It belongs to the azoreductase type 1 family. Homodimer. Requires FMN as cofactor.

It carries out the reaction 2 a quinone + NADH + H(+) = 2 a 1,4-benzosemiquinone + NAD(+). It catalyses the reaction N,N-dimethyl-1,4-phenylenediamine + anthranilate + 2 NAD(+) = 2-(4-dimethylaminophenyl)diazenylbenzoate + 2 NADH + 2 H(+). Quinone reductase that provides resistance to thiol-specific stress caused by electrophilic quinones. Its function is as follows. Also exhibits azoreductase activity. Catalyzes the reductive cleavage of the azo bond in aromatic azo compounds to the corresponding amines. This chain is FMN-dependent NADH:quinone oxidoreductase, found in Macrococcus caseolyticus (strain JCSC5402) (Macrococcoides caseolyticum).